Consider the following 470-residue polypeptide: Bifunctional protein ArgHA (470 aa).

The tract at residues 1–470 is argininosuccinate lyase; that stretch reads MALWGGRFSQ…TSGISIRAAR (470 aa).

In the N-terminal section; belongs to the lyase 1 family. Argininosuccinate lyase subfamily. It in the C-terminal section; belongs to the acetyltransferase family. ArgA subfamily.

The protein localises to the cytoplasm. The catalysed reaction is 2-(N(omega)-L-arginino)succinate = fumarate + L-arginine. The enzyme catalyses L-glutamate + acetyl-CoA = N-acetyl-L-glutamate + CoA + H(+). It functions in the pathway amino-acid biosynthesis; L-arginine biosynthesis; N(2)-acetyl-L-ornithine from L-glutamate: step 1/4. It participates in amino-acid biosynthesis; L-arginine biosynthesis; L-arginine from L-ornithine and carbamoyl phosphate: step 3/3. This Moritella profunda protein is Bifunctional protein ArgHA (argHA).